A 73-amino-acid chain; its full sequence is Translation initiation factor IF-1 (73 aa).

Residues 1 to 73 enclose the S1-like domain; the sequence is MAKKDGVIEI…NRGRIVYRYR (73 aa).

It belongs to the IF-1 family. Component of the 30S ribosomal translation pre-initiation complex which assembles on the 30S ribosome in the order IF-2 and IF-3, IF-1 and N-formylmethionyl-tRNA(fMet); mRNA recruitment can occur at any time during PIC assembly.

It localises to the cytoplasm. One of the essential components for the initiation of protein synthesis. Stabilizes the binding of IF-2 and IF-3 on the 30S subunit to which N-formylmethionyl-tRNA(fMet) subsequently binds. Helps modulate mRNA selection, yielding the 30S pre-initiation complex (PIC). Upon addition of the 50S ribosomal subunit IF-1, IF-2 and IF-3 are released leaving the mature 70S translation initiation complex. The chain is Translation initiation factor IF-1 from Acidothermus cellulolyticus (strain ATCC 43068 / DSM 8971 / 11B).